The following is a 299-amino-acid chain: Pyridoxal 5'-phosphate synthase subunit PdxS (299 aa).

Asp-24 contributes to the D-ribose 5-phosphate binding site. Catalysis depends on Lys-81, which acts as the Schiff-base intermediate with D-ribose 5-phosphate. Gly-153 provides a ligand contact to D-ribose 5-phosphate. Arg-165 is a D-glyceraldehyde 3-phosphate binding site. D-ribose 5-phosphate contacts are provided by residues Gly-219 and 240-241; that span reads GS.

This sequence belongs to the PdxS/SNZ family. In the presence of PdxT, forms a dodecamer of heterodimers.

It carries out the reaction aldehydo-D-ribose 5-phosphate + D-glyceraldehyde 3-phosphate + L-glutamine = pyridoxal 5'-phosphate + L-glutamate + phosphate + 3 H2O + H(+). Its pathway is cofactor biosynthesis; pyridoxal 5'-phosphate biosynthesis. Its function is as follows. Catalyzes the formation of pyridoxal 5'-phosphate from ribose 5-phosphate (RBP), glyceraldehyde 3-phosphate (G3P) and ammonia. The ammonia is provided by the PdxT subunit. Can also use ribulose 5-phosphate and dihydroxyacetone phosphate as substrates, resulting from enzyme-catalyzed isomerization of RBP and G3P, respectively. The chain is Pyridoxal 5'-phosphate synthase subunit PdxS from Methanococcus maripaludis (strain C7 / ATCC BAA-1331).